We begin with the raw amino-acid sequence, 130 residues long: Small ribosomal subunit protein uS8 (130 aa).

Belongs to the universal ribosomal protein uS8 family. As to quaternary structure, part of the 30S ribosomal subunit. Contacts proteins S5 and S12.

Functionally, one of the primary rRNA binding proteins, it binds directly to 16S rRNA central domain where it helps coordinate assembly of the platform of the 30S subunit. This Photorhabdus laumondii subsp. laumondii (strain DSM 15139 / CIP 105565 / TT01) (Photorhabdus luminescens subsp. laumondii) protein is Small ribosomal subunit protein uS8.